We begin with the raw amino-acid sequence, 659 residues long: A-type ATP synthase subunit I (659 aa).

8 helical membrane passes run 376 to 396 (FFFG…VISA), 415 to 435 (IMLW…SYCG), 460 to 480 (VMAL…GFIV), 489 to 509 (AAIL…LFAL), 513 to 533 (LGIP…LFVV), 542 to 562 (MAVL…LSYA), 566 to 586 (ALAL…NMVW), and 590 to 610 (IGPI…GHIF).

It belongs to the V-ATPase 116 kDa subunit family. As to quaternary structure, has multiple subunits with at least A(3), B(3), C, D, E, F, H, I and proteolipid K(x).

It is found in the cell membrane. Component of the A-type ATP synthase that produces ATP from ADP in the presence of a proton gradient across the membrane. The polypeptide is A-type ATP synthase subunit I (Pyrococcus abyssi (strain GE5 / Orsay)).